The following is a 413-amino-acid chain: Glycylpeptide N-tetradecanoyltransferase (413 aa).

Tetradecanoyl-CoA is bound by residues F34, W35, F163, L164, C165, V166, R174, L175, and A176.

The protein belongs to the NMT family.

The protein resides in the cytoplasm. The enzyme catalyses N-terminal glycyl-[protein] + tetradecanoyl-CoA = N-tetradecanoylglycyl-[protein] + CoA + H(+). Functionally, adds a myristoyl group to the N-terminal glycine residue of certain cellular proteins. This chain is Glycylpeptide N-tetradecanoyltransferase (nmt), found in Dictyostelium discoideum (Social amoeba).